A 160-amino-acid polypeptide reads, in one-letter code: Phosphopantetheine adenylyltransferase (160 aa).

A substrate-binding site is contributed by S10. ATP contacts are provided by residues 10 to 11 (SF) and H18. Substrate is bound by residues K42, T74, and R88. ATP contacts are provided by residues 89-91 (GLR), E99, and 124-130 (YSFISST).

The protein belongs to the bacterial CoaD family. Homohexamer. Requires Mg(2+) as cofactor.

The protein resides in the cytoplasm. It carries out the reaction (R)-4'-phosphopantetheine + ATP + H(+) = 3'-dephospho-CoA + diphosphate. The protein operates within cofactor biosynthesis; coenzyme A biosynthesis; CoA from (R)-pantothenate: step 4/5. Reversibly transfers an adenylyl group from ATP to 4'-phosphopantetheine, yielding dephospho-CoA (dPCoA) and pyrophosphate. The polypeptide is Phosphopantetheine adenylyltransferase (Leptospira interrogans serogroup Icterohaemorrhagiae serovar copenhageni (strain Fiocruz L1-130)).